The chain runs to 350 residues: Lipase chaperone (350 aa).

A helical membrane pass occupies residues 12-32; sequence IVLYLILGCVVVCGVWYSFDV.

The protein belongs to the lipase chaperone family.

The protein resides in the cell inner membrane. In terms of biological role, may be involved in the folding of the extracellular lipase during its passage through the periplasm. This chain is Lipase chaperone (lifO), found in Xylella fastidiosa (strain 9a5c).